A 701-amino-acid chain; its full sequence is Polyribonucleotide nucleotidyltransferase (701 aa).

Mg(2+) is bound by residues aspartate 487 and aspartate 493. Residues 553-612 (PRLYTLRINPDKIRDVIGKGGSVIRALTEETGTSIDIAEDGLITIASVSAEGAEEAKRRI) enclose the KH domain. An S1 motif domain is found at 622 to 692 (GKIYEGTVVK…ERGRIRLSIK (71 aa)).

The protein belongs to the polyribonucleotide nucleotidyltransferase family. Requires Mg(2+) as cofactor.

The protein localises to the cytoplasm. The catalysed reaction is RNA(n+1) + phosphate = RNA(n) + a ribonucleoside 5'-diphosphate. Involved in mRNA degradation. Catalyzes the phosphorolysis of single-stranded polyribonucleotides processively in the 3'- to 5'-direction. The sequence is that of Polyribonucleotide nucleotidyltransferase from Laribacter hongkongensis (strain HLHK9).